The sequence spans 401 residues: Stearoyl-[acyl-carrier-protein] 9-desaturase 3, chloroplastic (401 aa).

Residues 1–31 form a disordered region; sequence MSMALLLTSPAMKQKPAVITSPRRGSSPSRR. The transit peptide at 1 to 35 directs the protein to the chloroplast; the sequence is MSMALLLTSPAMKQKPAVITSPRRGSSPSRRLRVS. Fe cation is bound by residues glutamate 140, glutamate 178, histidine 181, glutamate 231, glutamate 264, and histidine 267.

It belongs to the fatty acid desaturase type 2 family. In terms of assembly, homodimer. Fe(2+) serves as cofactor. Ubiquitously expressed with a preference in leaves, flowers and stems.

The protein resides in the plastid. It is found in the chloroplast. The enzyme catalyses octadecanoyl-[ACP] + 2 reduced [2Fe-2S]-[ferredoxin] + O2 + 2 H(+) = (9Z)-octadecenoyl-[ACP] + 2 oxidized [2Fe-2S]-[ferredoxin] + 2 H2O. The protein operates within lipid metabolism; fatty acid metabolism. In terms of biological role, converts stearoyl-ACP to oleoyl-ACP by introduction of a cis double bond between carbons 9 and 10 of the acyl chain. Also able to convert palmitoyl-ACP to palmitoleoyl-ACP at the C9 position. Exhibits delta-9 palmitoyl-[acyl-carrier-protein] desaturase (PAD) activity. Involved in omega-7 monounsaturated fatty acid biosynthesis, especially in the endosperm oil. This Arabidopsis thaliana (Mouse-ear cress) protein is Stearoyl-[acyl-carrier-protein] 9-desaturase 3, chloroplastic (S-ACP-DES3).